The sequence spans 186 residues: Ribosome-recycling factor (186 aa).

Belongs to the RRF family.

Its subcellular location is the cytoplasm. Responsible for the release of ribosomes from messenger RNA at the termination of protein biosynthesis. May increase the efficiency of translation by recycling ribosomes from one round of translation to another. The polypeptide is Ribosome-recycling factor (Burkholderia cenocepacia (strain HI2424)).